Here is a 1241-residue protein sequence, read N- to C-terminus: Putative urea carboxylase (1241 aa).

In terms of domain architecture, Biotin carboxylation spans 3–459; the sequence is ALKTLLIANR…LTKFLNNFEY (457 aa). 2 residues coordinate ATP: K117 and E201. The 201-residue stretch at 121–321 folds into the ATP-grasp domain; that stretch reads RELATKAGVP…LVELMLRQAD (201 aa). A Biotinyl-binding domain is found at 1159 to 1239; it reads EELLKDPEIT…EAGKPLMLVR (81 aa). K1202 carries the N6-biotinyllysine modification.

The cofactor is biotin.

It carries out the reaction urea + hydrogencarbonate + ATP = urea-1-carboxylate + ADP + phosphate + H(+). Functionally, involved in the utilization of lactams. Required for the conversion of exogenous 2-pyrrolidinone (gamma-butyrolactam) to endogenous gamma-amino-n-butyrate (GABA). This is Putative urea carboxylase (lamA) from Emericella nidulans (strain FGSC A4 / ATCC 38163 / CBS 112.46 / NRRL 194 / M139) (Aspergillus nidulans).